We begin with the raw amino-acid sequence, 101 residues long: NAD(P)H-quinone oxidoreductase subunit 4L, chloroplastic (101 aa).

Transmembrane regions (helical) follow at residues M2–I22, I32–F52, and I61–L81.

Belongs to the complex I subunit 4L family. NDH is composed of at least 16 different subunits, 5 of which are encoded in the nucleus.

It is found in the plastid. It localises to the chloroplast thylakoid membrane. It carries out the reaction a plastoquinone + NADH + (n+1) H(+)(in) = a plastoquinol + NAD(+) + n H(+)(out). The enzyme catalyses a plastoquinone + NADPH + (n+1) H(+)(in) = a plastoquinol + NADP(+) + n H(+)(out). Its function is as follows. NDH shuttles electrons from NAD(P)H:plastoquinone, via FMN and iron-sulfur (Fe-S) centers, to quinones in the photosynthetic chain and possibly in a chloroplast respiratory chain. The immediate electron acceptor for the enzyme in this species is believed to be plastoquinone. Couples the redox reaction to proton translocation, and thus conserves the redox energy in a proton gradient. In Zea mays (Maize), this protein is NAD(P)H-quinone oxidoreductase subunit 4L, chloroplastic.